Reading from the N-terminus, the 534-residue chain is Serine/threonine-protein kinase ppk15 (534 aa).

Positions 1-40 (MDSDSPILPLSNNPPAARTHDHSQRNNHARHVSSSGTTLF) are disordered. 3 positions are modified to phosphoserine: S33, S56, and S60. The disordered stretch occupies residues 85–104 (FSSEQNPRRPLTKPSEGVHN). A Protein kinase domain is found at 130 to 458 (YLILDTLGHG…PDQAKNHPFI (329 aa)). ATP contacts are provided by residues 136–144 (LGHGTFGQV) and K159. D257 acts as the Proton acceptor in catalysis. A Phosphotyrosine modification is found at Y291.

It belongs to the protein kinase superfamily. Ser/Thr protein kinase family.

The protein resides in the cytoplasm. It is found in the cytoskeleton. Its subcellular location is the microtubule organizing center. The protein localises to the spindle pole body. It carries out the reaction L-seryl-[protein] + ATP = O-phospho-L-seryl-[protein] + ADP + H(+). The catalysed reaction is L-threonyl-[protein] + ATP = O-phospho-L-threonyl-[protein] + ADP + H(+). The chain is Serine/threonine-protein kinase ppk15 (ppk15) from Schizosaccharomyces pombe (strain 972 / ATCC 24843) (Fission yeast).